We begin with the raw amino-acid sequence, 224 residues long: ATP phosphoribosyltransferase (224 aa).

This sequence belongs to the ATP phosphoribosyltransferase family. Short subfamily. Heteromultimer composed of HisG and HisZ subunits.

It is found in the cytoplasm. It carries out the reaction 1-(5-phospho-beta-D-ribosyl)-ATP + diphosphate = 5-phospho-alpha-D-ribose 1-diphosphate + ATP. The protein operates within amino-acid biosynthesis; L-histidine biosynthesis; L-histidine from 5-phospho-alpha-D-ribose 1-diphosphate: step 1/9. Catalyzes the condensation of ATP and 5-phosphoribose 1-diphosphate to form N'-(5'-phosphoribosyl)-ATP (PR-ATP). Has a crucial role in the pathway because the rate of histidine biosynthesis seems to be controlled primarily by regulation of HisG enzymatic activity. In Cupriavidus pinatubonensis (strain JMP 134 / LMG 1197) (Cupriavidus necator (strain JMP 134)), this protein is ATP phosphoribosyltransferase.